The following is a 209-amino-acid chain: Segregation and condensation protein B (209 aa).

This sequence belongs to the ScpB family. Homodimer. Homodimerization may be required to stabilize the binding of ScpA to the Smc head domains. Component of a cohesin-like complex composed of ScpA, ScpB and the Smc homodimer, in which ScpA and ScpB bind to the head domain of Smc. The presence of the three proteins is required for the association of the complex with DNA.

The protein localises to the cytoplasm. Its function is as follows. Participates in chromosomal partition during cell division. May act via the formation of a condensin-like complex containing Smc and ScpA that pull DNA away from mid-cell into both cell halves. This chain is Segregation and condensation protein B, found in Geobacillus thermodenitrificans (strain NG80-2).